Consider the following 404-residue polypeptide: S-adenosylmethionine synthase (404 aa).

The segment covering 1 to 13 has biased composition (polar residues); it reads MSQSRYFFTSESV. A disordered region spans residues 1–20; the sequence is MSQSRYFFTSESVSEGHPDK. Position 17 (histidine 17) interacts with ATP. Position 19 (aspartate 19) interacts with Mg(2+). Glutamate 45 is a K(+) binding site. 2 residues coordinate L-methionine: glutamate 58 and glutamine 101. The segment at 101 to 111 is flexible loop; the sequence is QSPDINRGVDR. Residues 172 to 174, 245 to 246, aspartate 254, 260 to 261, alanine 277, and lysine 281 each bind ATP; these read DAK, RF, and RK. An L-methionine-binding site is contributed by aspartate 254. Lysine 285 is an L-methionine binding site.

It belongs to the AdoMet synthase family. Homotetramer; dimer of dimers. Requires Mg(2+) as cofactor. The cofactor is K(+).

Its subcellular location is the cytoplasm. The enzyme catalyses L-methionine + ATP + H2O = S-adenosyl-L-methionine + phosphate + diphosphate. It participates in amino-acid biosynthesis; S-adenosyl-L-methionine biosynthesis; S-adenosyl-L-methionine from L-methionine: step 1/1. Catalyzes the formation of S-adenosylmethionine (AdoMet) from methionine and ATP. The overall synthetic reaction is composed of two sequential steps, AdoMet formation and the subsequent tripolyphosphate hydrolysis which occurs prior to release of AdoMet from the enzyme. The protein is S-adenosylmethionine synthase of Chlorobium limicola (strain DSM 245 / NBRC 103803 / 6330).